Here is a 282-residue protein sequence, read N- to C-terminus: V-set domain-containing T-cell activation inhibitor 1 (282 aa).

The signal sequence occupies residues 1–24 (MASLGQIIFWSIINVIIILAGAIV). Ig-like V-type domains are found at residues 35–144 (HFIT…ANLE) and 153–241 (PEIN…IKVT). Disulfide bonds link Cys56-Cys130 and Cys168-Cys225. A glycan (N-linked (GlcNAc...) asparagine) is linked at Asn216. Gly257 carries the GPI-anchor amidated glycine lipid modification. Residues 258–282 (PSPCVSSVSAAGWALLSLSCCLMLR) constitute a propeptide, removed in mature form.

Belongs to the immunoglobulin superfamily. BTN/MOG family. Post-translationally, N-glycosylated.

The protein localises to the cell membrane. Functionally, negatively regulates T-cell-mediated immune response by inhibiting T-cell activation, proliferation, cytokine production and development of cytotoxicity. When expressed on the cell surface of tumor macrophages, plays an important role, together with regulatory T-cells (Treg), in the suppression of tumor-associated antigen-specific T-cell immunity. Involved in promoting epithelial cell transformation. This is V-set domain-containing T-cell activation inhibitor 1 from Rattus norvegicus (Rat).